The following is a 141-amino-acid chain: Large ribosomal subunit protein uL11 (141 aa).

This sequence belongs to the universal ribosomal protein uL11 family. In terms of assembly, part of the ribosomal stalk of the 50S ribosomal subunit. Interacts with L10 and the large rRNA to form the base of the stalk. L10 forms an elongated spine to which L12 dimers bind in a sequential fashion forming a multimeric L10(L12)X complex. In terms of processing, one or more lysine residues are methylated.

Functionally, forms part of the ribosomal stalk which helps the ribosome interact with GTP-bound translation factors. The protein is Large ribosomal subunit protein uL11 of Gloeothece citriformis (strain PCC 7424) (Cyanothece sp. (strain PCC 7424)).